Reading from the N-terminus, the 158-residue chain is Peptide methionine sulfoxide reductase MsrA (158 aa).

C10 is a catalytic residue.

It belongs to the MsrA Met sulfoxide reductase family.

It catalyses the reaction L-methionyl-[protein] + [thioredoxin]-disulfide + H2O = L-methionyl-(S)-S-oxide-[protein] + [thioredoxin]-dithiol. The catalysed reaction is [thioredoxin]-disulfide + L-methionine + H2O = L-methionine (S)-S-oxide + [thioredoxin]-dithiol. In terms of biological role, has an important function as a repair enzyme for proteins that have been inactivated by oxidation. Catalyzes the reversible oxidation-reduction of methionine sulfoxide in proteins to methionine. The chain is Peptide methionine sulfoxide reductase MsrA from Alkaliphilus metalliredigens (strain QYMF).